The chain runs to 317 residues: tRNA dimethylallyltransferase (317 aa).

14–21 (GPTASGKS) lines the ATP pocket. Residue 16 to 21 (TASGKS) coordinates substrate. Interaction with substrate tRNA regions lie at residues 39 to 42 (DSVL) and 163 to 167 (QRIQR).

This sequence belongs to the IPP transferase family. Monomer. It depends on Mg(2+) as a cofactor.

The catalysed reaction is adenosine(37) in tRNA + dimethylallyl diphosphate = N(6)-dimethylallyladenosine(37) in tRNA + diphosphate. Catalyzes the transfer of a dimethylallyl group onto the adenine at position 37 in tRNAs that read codons beginning with uridine, leading to the formation of N6-(dimethylallyl)adenosine (i(6)A). This is tRNA dimethylallyltransferase from Xylella fastidiosa (strain M12).